Reading from the N-terminus, the 1394-residue chain is DNA-directed RNA polymerase subunit beta' (1394 aa).

Zn(2+)-binding residues include Cys-71, Cys-73, Cys-86, and Cys-89. Mg(2+) is bound by residues Asp-462, Asp-464, and Asp-466. Zn(2+) is bound by residues Cys-810, Cys-883, Cys-890, and Cys-893.

This sequence belongs to the RNA polymerase beta' chain family. The RNAP catalytic core consists of 2 alpha, 1 beta, 1 beta' and 1 omega subunit. When a sigma factor is associated with the core the holoenzyme is formed, which can initiate transcription. The cofactor is Mg(2+). Zn(2+) is required as a cofactor.

It catalyses the reaction RNA(n) + a ribonucleoside 5'-triphosphate = RNA(n+1) + diphosphate. In terms of biological role, DNA-dependent RNA polymerase catalyzes the transcription of DNA into RNA using the four ribonucleoside triphosphates as substrates. The chain is DNA-directed RNA polymerase subunit beta' from Beijerinckia indica subsp. indica (strain ATCC 9039 / DSM 1715 / NCIMB 8712).